The chain runs to 197 residues: Glycerol-3-phosphate acyltransferase (197 aa).

5 helical membrane passes run M1–I21, L50–A70, I82–F102, L112–A132, and G159–H179.

It belongs to the PlsY family. As to quaternary structure, probably interacts with PlsX.

It localises to the cell inner membrane. It carries out the reaction an acyl phosphate + sn-glycerol 3-phosphate = a 1-acyl-sn-glycero-3-phosphate + phosphate. The protein operates within lipid metabolism; phospholipid metabolism. Catalyzes the transfer of an acyl group from acyl-phosphate (acyl-PO(4)) to glycerol-3-phosphate (G3P) to form lysophosphatidic acid (LPA). This enzyme utilizes acyl-phosphate as fatty acyl donor, but not acyl-CoA or acyl-ACP. In Desulfotalea psychrophila (strain LSv54 / DSM 12343), this protein is Glycerol-3-phosphate acyltransferase.